A 310-amino-acid polypeptide reads, in one-letter code: Cytosolic Fe-S cluster assembly factor Nubp1 homolog (310 aa).

Residues cysteine 9, cysteine 23, cysteine 26, and cysteine 32 each coordinate [4Fe-4S] cluster. 63 to 70 (GKGGVGKS) provides a ligand contact to ATP. Cysteine 240 and cysteine 243 together coordinate [4Fe-4S] cluster.

Belongs to the Mrp/NBP35 ATP-binding proteins family. NUBP1/NBP35 subfamily. Heterotetramer of 2 Nubp1 and 2 Nubp2 chains. Requires [4Fe-4S] cluster as cofactor.

The protein localises to the cytoplasm. Component of the cytosolic iron-sulfur (Fe/S) protein assembly (CIA) machinery. Required for maturation of extramitochondrial Fe-S proteins. The Nubp1-Nubp2 heterotetramer forms a Fe-S scaffold complex, mediating the de novo assembly of an Fe-S cluster and its transfer to target apoproteins. This chain is Cytosolic Fe-S cluster assembly factor Nubp1 homolog, found in Drosophila virilis (Fruit fly).